Here is a 590-residue protein sequence, read N- to C-terminus: Beta-fructofuranosidase, insoluble isoenzyme 4 (590 aa).

The N-terminal stretch at 1 to 28 (MVMAPIPQPWHQWPFLILFFLVLFSCES) is a signal peptide. Substrate contacts are provided by residues 71–74 (WIND) and Q90. D74 is an active-site residue. A glycan (N-linked (GlcNAc...) asparagine) is linked at N94. Residues W98 and 133-134 (WT) contribute to the substrate site. The N-linked (GlcNAc...) asparagine glycan is linked to N167. 198–199 (RD) serves as a coordination point for substrate. The N-linked (GlcNAc...) asparagine glycan is linked to N247. 2 residues coordinate substrate: E253 and D287. Residue N345 is glycosylated (N-linked (GlcNAc...) asparagine). C445 and C491 are disulfide-bonded. N-linked (GlcNAc...) asparagine glycosylation occurs at N565.

It belongs to the glycosyl hydrolase 32 family. In terms of tissue distribution, expressed in leaves. Expressed at moderate levels in roots and flowers, and weakly in seeds.

The protein resides in the secreted. The protein localises to the extracellular space. Its subcellular location is the apoplast. It is found in the cell wall. It carries out the reaction Hydrolysis of terminal non-reducing beta-D-fructofuranoside residues in beta-D-fructofuranosides.. Its function is as follows. May play a role in sucrose partitioning during seed development and in stress response. The chain is Beta-fructofuranosidase, insoluble isoenzyme 4 (CIN4) from Oryza sativa subsp. japonica (Rice).